The following is a 793-amino-acid chain: MRVSLSSLQRFFSSPLPIKQIIEACDHIGIETEVETLLTCSFSSIITAKVLKTVPHPNADKLVVATLFDGQQEYQIVCGAPNCRPGIIIPLALPGAKLHDHEGNAYTIKKSKLRGVESQGMCCGADELGFAHLQTTERGLFEFPENTPLGESACALLADTFIECSLTPNLGHCASLLGLAREITYVTNVDLVLPPEFVCTPLETITKETSGQDQHLCPIFCCVKISGVSAQASPQELQNALGGLKQKSINSIVDITNYIMLSLGQPLHVYDANAVDIDSLHAQKAQKDEPLKLLNNEEVLVPQGTAIICDKDHTVGLAGVMGSLDSSFNDATTEIILEAAYFLPSAIRASQTHVPIHSEAAYRFTRGIDPNNVLPALYAAIHYIQKLFPNAKVSPIQVLGSTPQASTLSFRTELVGKILGMPLHASQVRDQLHSLGFNISSEENSILSVNIPSYRHDIQEEIDLVEEVCRTQPWKVENKKAPAIYSPMYSLKRRVVDFLANSGLQQFFTCDLLDTETAALNREEADCISLQGSKQATVLRDSLLPGLLKSTATNLNRQAPYVHAFEVGTTYTKKSSKYQETQSLGIILSGQAEEISWISHERPLSFYSIKGWIERLFQYLHVSSQAYAIQPYEHANFHPYQQAEIHLHKHVLGRFGTLHPQLCKKAQIKHSVFFAELSLDSLLHTQKKALHLYKPYPIYPSSFRDITLTVHESVPADSLRKKLLSFHSKWLESVSIISIYQNKNPTTQNKNVSLRLVFQDKERTLSNQEIEEEHERLLAMLNAQINDTKGTID.

Residues 39–154 enclose the tRNA-binding domain; the sequence is TCSFSSIITA…ENTPLGESAC (116 aa). The region spanning 403-481 is the B5 domain; sequence PQASTLSFRT…QPWKVENKKA (79 aa). Mg(2+)-binding residues include Asp457, Asp463, Glu466, and Glu467. In terms of domain architecture, FDX-ACB spans 697–793; it reads PIYPSSFRDI…QINDTKGTID (97 aa).

The protein belongs to the phenylalanyl-tRNA synthetase beta subunit family. Type 1 subfamily. Tetramer of two alpha and two beta subunits. It depends on Mg(2+) as a cofactor.

The protein localises to the cytoplasm. The catalysed reaction is tRNA(Phe) + L-phenylalanine + ATP = L-phenylalanyl-tRNA(Phe) + AMP + diphosphate + H(+). This is Phenylalanine--tRNA ligase beta subunit from Chlamydia caviae (strain ATCC VR-813 / DSM 19441 / 03DC25 / GPIC) (Chlamydophila caviae).